The primary structure comprises 624 residues: uncharacterized protein (624 aa).

The first 29 residues, 1 to 29 (MRFHRQGTAATVGVLLIVLLGFCWKLSES), serve as a signal peptide directing secretion. N68, N150, N219, N366, N441, N447, N464, and N528 each carry an N-linked (GlcNAc...) asparagine glycan. A disordered region spans residues 141–174 (LERRHGRFGNGTHGDHPKGPPPPPPPDEKDRGSQ).

It is found in the secreted. This is an uncharacterized protein from Saccharomyces cerevisiae (strain ATCC 204508 / S288c) (Baker's yeast).